We begin with the raw amino-acid sequence, 621 residues long: Chaperone protein HtpG (621 aa).

Residues 1 to 328 (MKQEKKKFDA…SEDLPLNISR (328 aa)) form an a; substrate-binding region. Positions 329–544 (ESLQHNNVLE…EAAMDIRMER (216 aa)) are b. The interval 479–498 (VDQATSSSEEKNKDDKKSDD) is disordered. Positions 486-498 (SEEKNKDDKKSDD) are enriched in basic and acidic residues. Residues 545-621 (FLIEQKQIAN…LNDIVQKAIL (77 aa)) form a c region.

The protein belongs to the heat shock protein 90 family. In terms of assembly, homodimer.

Its subcellular location is the cytoplasm. In terms of biological role, molecular chaperone. Has ATPase activity. In Rickettsia bellii (strain OSU 85-389), this protein is Chaperone protein HtpG.